The chain runs to 101 residues: Small ribosomal subunit protein uS14 (101 aa).

Residues 1-21 are disordered; it reads MAKTSSVEKNNRRRKLADQYG.

It belongs to the universal ribosomal protein uS14 family. In terms of assembly, part of the 30S ribosomal subunit. Contacts proteins S3 and S10.

Functionally, binds 16S rRNA, required for the assembly of 30S particles and may also be responsible for determining the conformation of the 16S rRNA at the A site. This is Small ribosomal subunit protein uS14 from Mesorhizobium japonicum (strain LMG 29417 / CECT 9101 / MAFF 303099) (Mesorhizobium loti (strain MAFF 303099)).